The sequence spans 137 residues: Small ribosomal subunit protein uS12 (137 aa).

Residues 1–57 form a disordered region; it reads MPTINQLVRKPRKSKVEKSKSPALNVGYNSHKKVQTNVSSPQKRGVATRVGTMTPKK. Asp-102 carries the post-translational modification 3-methylthioaspartic acid.

The protein belongs to the universal ribosomal protein uS12 family. Part of the 30S ribosomal subunit. Contacts proteins S8 and S17. May interact with IF1 in the 30S initiation complex.

With S4 and S5 plays an important role in translational accuracy. Its function is as follows. Interacts with and stabilizes bases of the 16S rRNA that are involved in tRNA selection in the A site and with the mRNA backbone. Located at the interface of the 30S and 50S subunits, it traverses the body of the 30S subunit contacting proteins on the other side and probably holding the rRNA structure together. The combined cluster of proteins S8, S12 and S17 appears to hold together the shoulder and platform of the 30S subunit. The polypeptide is Small ribosomal subunit protein uS12 (Streptococcus pneumoniae serotype 2 (strain D39 / NCTC 7466)).